A 514-amino-acid polypeptide reads, in one-letter code: Citrate synthase 2, peroxisomal (514 aa).

Active-site residues include His324, His363, and Asp419.

Belongs to the citrate synthase family. Widely expressed. Expressed throughout the shoot. Expressed in flower, silique, stem, cauline leaf, young leaf, mature leaf and senescent leaf.

The protein resides in the peroxisome. The catalysed reaction is oxaloacetate + acetyl-CoA + H2O = citrate + CoA + H(+). Its pathway is carbohydrate metabolism; tricarboxylic acid cycle; isocitrate from oxaloacetate: step 1/2. Peroxisomal citrate synthase required for the fatty acid respiration in seedlings, citrate being exported from peroxisomes into mitochondria during respiration of triacylglycerol (TAG). Indeed, complete respiration requires the transfer of carbon in the form of citrate from the peroxisome to the mitochondria. This Arabidopsis thaliana (Mouse-ear cress) protein is Citrate synthase 2, peroxisomal (CSY2).